The sequence spans 342 residues: Cell division protein ZipA (342 aa).

Topologically, residues 1–6 (MEDLQL) are periplasmic. A helical transmembrane segment spans residues 7-27 (VLFILGAIAIVAVLVHGFWSI). The Cytoplasmic segment spans residues 28–342 (RRQQPKSLKD…DYLHRIRANA (315 aa)). The disordered stretch occupies residues 33 to 57 (KSLKDSPMGNFYKQQADKESPPKRV). The segment covering 47-57 (QADKESPPKRV) has biased composition (basic and acidic residues).

Belongs to the ZipA family. As to quaternary structure, interacts with FtsZ via their C-terminal domains.

It localises to the cell inner membrane. Its function is as follows. Essential cell division protein that stabilizes the FtsZ protofilaments by cross-linking them and that serves as a cytoplasmic membrane anchor for the Z ring. Also required for the recruitment to the septal ring of downstream cell division proteins. The sequence is that of Cell division protein ZipA from Shewanella putrefaciens (strain CN-32 / ATCC BAA-453).